The primary structure comprises 360 residues: Peptide chain release factor 1 (360 aa).

Q237 carries the N5-methylglutamine modification.

The protein belongs to the prokaryotic/mitochondrial release factor family. Methylated by PrmC. Methylation increases the termination efficiency of RF1.

It localises to the cytoplasm. Peptide chain release factor 1 directs the termination of translation in response to the peptide chain termination codons UAG and UAA. In Pseudomonas putida (strain GB-1), this protein is Peptide chain release factor 1.